Here is a 263-residue protein sequence, read N- to C-terminus: 4-hydroxy-2-oxo-heptane-1,7-dioate aldolase (263 aa).

Histidine 45 (proton acceptor) is an active-site residue. Position 147 (glutamine 147) interacts with substrate. Glutamate 149 is a binding site for a divalent metal cation. Substrate is bound by residues alanine 174 and aspartate 175. Aspartate 175 lines the a divalent metal cation pocket.

Belongs to the HpcH/HpaI aldolase family. In terms of assembly, homohexamer; trimer of dimers. Requires a divalent metal cation as cofactor.

The enzyme catalyses 4-hydroxy-2-oxoheptanedioate = succinate semialdehyde + pyruvate. It functions in the pathway aromatic compound metabolism; 4-hydroxyphenylacetate degradation; pyruvate and succinate semialdehyde from 4-hydroxyphenylacetate: step 7/7. In terms of biological role, catalyzes the reversible retro-aldol cleavage of 4-hydroxy-2-ketoheptane-1,7-dioate (HKHD) to pyruvate and succinic semialdehyde. In Salmonella dublin (strain CT_02021853), this protein is 4-hydroxy-2-oxo-heptane-1,7-dioate aldolase.